Consider the following 435-residue polypeptide: Arginine biosynthesis bifunctional protein ArgJ, mitochondrial (435 aa).

Residues Thr179, Lys205, Thr216, Glu302, Asn430, and Ser435 each coordinate substrate. The active-site Nucleophile is the Thr216.

The protein belongs to the ArgJ family. As to quaternary structure, heterodimer of an alpha and a beta chain. Post-translationally, the alpha and beta chains are autoproteolytically processed from a single precursor protein within the mitochondrion.

Its subcellular location is the mitochondrion matrix. The catalysed reaction is N(2)-acetyl-L-ornithine + L-glutamate = N-acetyl-L-glutamate + L-ornithine. It catalyses the reaction L-glutamate + acetyl-CoA = N-acetyl-L-glutamate + CoA + H(+). It functions in the pathway amino-acid biosynthesis; L-arginine biosynthesis; L-ornithine and N-acetyl-L-glutamate from L-glutamate and N(2)-acetyl-L-ornithine (cyclic): step 1/1. It participates in amino-acid biosynthesis; L-arginine biosynthesis; N(2)-acetyl-L-ornithine from L-glutamate: step 1/4. Functionally, catalyzes two activities which are involved in the cyclic version of arginine biosynthesis: the synthesis of acetylglutamate from glutamate and acetyl-CoA, and of ornithine by transacetylation between acetylornithine and glutamate. The sequence is that of Arginine biosynthesis bifunctional protein ArgJ, mitochondrial from Schizosaccharomyces japonicus (strain yFS275 / FY16936) (Fission yeast).